Consider the following 505-residue polypeptide: uncharacterized protein (505 aa).

The tract at residues 461-480 is disordered; that stretch reads RTDVHPGNSDDEGAYSSADS.

This sequence to M.jannaschii MJ0787.

This is an uncharacterized protein from Methanothermobacter thermautotrophicus (strain ATCC 29096 / DSM 1053 / JCM 10044 / NBRC 100330 / Delta H) (Methanobacterium thermoautotrophicum).